Reading from the N-terminus, the 435-residue chain is Glycine reductase complex component B subunit gamma (435 aa).

Residue Sec350 is part of the active site. Position 350 (Sec350) is a non-standard amino acid, selenocysteine.

This sequence belongs to the GrdB/GrdF/GrdH family. In terms of assembly, heterohexamer of two alpha, two beta and two gamma subunits. Component of the glycine reductase complex, together with components A and C. PB is substrate specific.

It carries out the reaction acetyl phosphate + [thioredoxin]-disulfide + NH4(+) + H2O = [thioredoxin]-dithiol + glycine + phosphate + H(+). In the first step of glycine reductase, the substrate is bound to component PB via a Schiff base intermediate. Then the PB-activated substrate is nucleophilically attacked by the selenol anion of component PA to transform it to a carboxymethylated selenoether and the respective amine. By action of component PC, acetyl phosphate is formed, leaving component PA in its oxidized state. Finally component PA becomes reduced by the thioredoxin system to start a new catalytic cycle of reductive deamination. The sequence is that of Glycine reductase complex component B subunit gamma (grdB) from Carboxydothermus hydrogenoformans (strain ATCC BAA-161 / DSM 6008 / Z-2901).